Reading from the N-terminus, the 400-residue chain is Lysophospholipid transporter LplT (400 aa).

Helical transmembrane passes span Val-19–Ala-39, Val-53–Ala-73, Ala-91–Ile-111, Leu-139–Ala-159, Ile-164–Ile-184, Ser-195–Trp-213, Leu-227–Leu-247, Tyr-257–Val-277, Thr-281–Leu-301, Ala-304–Val-324, Asn-352–Ala-372, and Val-373–Trp-393.

Belongs to the major facilitator superfamily. LplT (TC 2.A.1.42) family.

It is found in the cell inner membrane. Catalyzes the facilitated diffusion of 2-acyl-glycero-3-phosphoethanolamine (2-acyl-GPE) into the cell. This Salmonella newport (strain SL254) protein is Lysophospholipid transporter LplT.